Here is a 179-residue protein sequence, read N- to C-terminus: FADH(2)-dependent resorcinol hydroxylase, reductase component (179 aa).

This sequence belongs to the non-flavoprotein flavin reductase family. In terms of assembly, the FADH(2)-dependent resorcinol hydroxylase is composed of two subunits, GraA (the oxygenase component) and GraD (the reductase component). Both subunits are required for activity.

The catalysed reaction is FADH2 + NAD(+) = FAD + NADH + 2 H(+). Its pathway is aromatic compound metabolism. Involved in the gamma-resorcylate (2,6-dihydroxybenzoate) catabolism. Reductase component of the resorcinol hydroxylase, which catalyzes the FADPH-dependent conversion of resorcinol to hydroxyquinol. Catalyzes the reduction of FAD by NADH. The reduced flavin is then transferred to the oxygenase component GraA. In Rhizobium sp. (strain MTP-10005), this protein is FADH(2)-dependent resorcinol hydroxylase, reductase component.